Reading from the N-terminus, the 271-residue chain is Putative hydro-lyase jk0403 (271 aa).

Belongs to the D-glutamate cyclase family.

This is Putative hydro-lyase jk0403 from Corynebacterium jeikeium (strain K411).